Here is a 212-residue protein sequence, read N- to C-terminus: Thymidylate kinase (212 aa).

10 to 17 (GPEGAGKT) is a binding site for ATP.

The protein belongs to the thymidylate kinase family.

It carries out the reaction dTMP + ATP = dTDP + ADP. Phosphorylation of dTMP to form dTDP in both de novo and salvage pathways of dTTP synthesis. This Bacillus licheniformis (strain ATCC 14580 / DSM 13 / JCM 2505 / CCUG 7422 / NBRC 12200 / NCIMB 9375 / NCTC 10341 / NRRL NRS-1264 / Gibson 46) protein is Thymidylate kinase.